A 277-amino-acid polypeptide reads, in one-letter code: 3-methyl-2-oxobutanoate hydroxymethyltransferase (277 aa).

Positions 43 and 82 each coordinate Mg(2+). 3-methyl-2-oxobutanoate contacts are provided by residues 43–44 (DS), D82, and K112. Mg(2+) is bound at residue E114. The active-site Proton acceptor is the E181.

This sequence belongs to the PanB family. In terms of assembly, homodecamer; pentamer of dimers. Mg(2+) serves as cofactor.

Its subcellular location is the cytoplasm. The enzyme catalyses 3-methyl-2-oxobutanoate + (6R)-5,10-methylene-5,6,7,8-tetrahydrofolate + H2O = 2-dehydropantoate + (6S)-5,6,7,8-tetrahydrofolate. Its pathway is cofactor biosynthesis; (R)-pantothenate biosynthesis; (R)-pantoate from 3-methyl-2-oxobutanoate: step 1/2. Functionally, catalyzes the reversible reaction in which hydroxymethyl group from 5,10-methylenetetrahydrofolate is transferred onto alpha-ketoisovalerate to form ketopantoate. The sequence is that of 3-methyl-2-oxobutanoate hydroxymethyltransferase from Exiguobacterium sp. (strain ATCC BAA-1283 / AT1b).